The following is a 396-amino-acid chain: Glyceraldehyde-3-phosphate dehydrogenase GAPA1, chloroplastic (396 aa).

The transit peptide at 1-60 (MASVTFSVPKGFTEFSGLRSSSASLPFGKKLSSDEFVSIVSFQTSAMGSSGGYRKGVTEA) directs the protein to the chloroplast. NADP(+)-binding positions include 71-72 (RI), aspartate 95, and arginine 140. D-glyceraldehyde 3-phosphate contacts are provided by residues 212-214 (SCT), threonine 243, arginine 258, 271-272 (TG), and arginine 294. Cysteine 213 serves as the catalytic Nucleophile. NADP(+) is bound at residue asparagine 376.

This sequence belongs to the glyceraldehyde-3-phosphate dehydrogenase family. Tetramer of either four A chains (GAPDH 2) or two A and two B chains (GAPDH 1). As to expression, expressed in leaves and stems.

It is found in the plastid. The protein resides in the chloroplast membrane. Its subcellular location is the chloroplast stroma. It catalyses the reaction D-glyceraldehyde 3-phosphate + phosphate + NADP(+) = (2R)-3-phospho-glyceroyl phosphate + NADPH + H(+). It participates in carbohydrate biosynthesis; Calvin cycle. In terms of biological role, involved in the photosynthetic reductive pentose phosphate pathway (Calvin-Benson cycle). Catalyzes the reduction of 1,3-diphosphoglycerate by NADPH. This Arabidopsis thaliana (Mouse-ear cress) protein is Glyceraldehyde-3-phosphate dehydrogenase GAPA1, chloroplastic (GAPA1).